A 2833-amino-acid chain; its full sequence is Reticulocyte-binding protein 1 (2833 aa).

The N-terminal stretch at 1 to 22 (MKRGICLAALLCLFNYLGAGHG) is a signal peptide. Basic and acidic residues predominate over residues 75–91 (ETDNASGKDAEGSRPSH). Disordered stretches follow at residues 75–95 (ETDN…DSSF), 112–133 (HVKE…KENE), and 819–860 (KHKQ…NFSR). Over residues 819–836 (KHKQNRSEKEEEYFKNES) the composition is skewed to basic and acidic residues. Over residues 837–849 (VEEDLSREETEEQ) the composition is skewed to acidic residues. A Cell attachment site motif is present at residues 2563 to 2565 (RGD). The tract at residues 2619–2755 (EMNSKKSAIE…GTYQDTSNSS (137 aa)) is disordered. 2 stretches are compositionally biased toward basic and acidic residues: residues 2621 to 2633 (NSKK…EKTA) and 2640 to 2652 (ENNR…RARV). Residues 2655–2670 (MSMNNDPTQSETTHSE) are compositionally biased toward polar residues. Acidic residues predominate over residues 2706–2720 (LEEEETTAPMEETEM). Basic and acidic residues predominate over residues 2731–2742 (TRSDEPDMHTEN). Positions 2743–2755 (TQDGTYQDTSNSS) are enriched in polar residues.

As to quaternary structure, homodimer.

Its subcellular location is the membrane. In terms of biological role, involved in reticulocyte adhesion. Specifically binds to human reticulocyte cells. In Plasmodium vivax (strain Belem), this protein is Reticulocyte-binding protein 1 (RBP1).